Here is a 171-residue protein sequence, read N- to C-terminus: AAF/I fimbrial subunit (171 aa).

The signal sequence occupies residues 1–28 (MKTLKNMRRKNLCITLGLVSLLSRGANA).

Its subcellular location is the fimbrium. The sequence is that of AAF/I fimbrial subunit (aggA) from Escherichia coli.